The sequence spans 328 residues: Tetraacyldisaccharide 4'-kinase (328 aa).

An ATP-binding site is contributed by 55–62 (TAGGNGKT).

The protein belongs to the LpxK family.

The catalysed reaction is a lipid A disaccharide + ATP = a lipid IVA + ADP + H(+). It functions in the pathway glycolipid biosynthesis; lipid IV(A) biosynthesis; lipid IV(A) from (3R)-3-hydroxytetradecanoyl-[acyl-carrier-protein] and UDP-N-acetyl-alpha-D-glucosamine: step 6/6. Functionally, transfers the gamma-phosphate of ATP to the 4'-position of a tetraacyldisaccharide 1-phosphate intermediate (termed DS-1-P) to form tetraacyldisaccharide 1,4'-bis-phosphate (lipid IVA). In Escherichia coli O157:H7, this protein is Tetraacyldisaccharide 4'-kinase.